We begin with the raw amino-acid sequence, 421 residues long: Putative nickel insertion protein (421 aa).

It belongs to the LarC family.

This is Putative nickel insertion protein from Gloeobacter violaceus (strain ATCC 29082 / PCC 7421).